The sequence spans 542 residues: GMP synthase [glutamine-hydrolyzing] (542 aa).

One can recognise a Glutamine amidotransferase type-1 domain in the interval Met-28–Thr-218. Residue Cys-105 is the Nucleophile of the active site. Catalysis depends on residues His-192 and Glu-194. The region spanning Trp-219–Arg-417 is the GMPS ATP-PPase domain. Ser-246–Ser-252 is a binding site for ATP.

Homodimer.

It carries out the reaction XMP + L-glutamine + ATP + H2O = GMP + L-glutamate + AMP + diphosphate + 2 H(+). Its pathway is purine metabolism; GMP biosynthesis; GMP from XMP (L-Gln route): step 1/1. Catalyzes the synthesis of GMP from XMP. The protein is GMP synthase [glutamine-hydrolyzing] of Crocosphaera subtropica (strain ATCC 51142 / BH68) (Cyanothece sp. (strain ATCC 51142)).